Here is a 430-residue protein sequence, read N- to C-terminus: Glutamate-1-semialdehyde 2,1-aminomutase (430 aa).

Lysine 265 is subject to N6-(pyridoxal phosphate)lysine.

Belongs to the class-III pyridoxal-phosphate-dependent aminotransferase family. HemL subfamily. As to quaternary structure, homodimer. The cofactor is pyridoxal 5'-phosphate.

The protein localises to the cytoplasm. It catalyses the reaction (S)-4-amino-5-oxopentanoate = 5-aminolevulinate. It functions in the pathway porphyrin-containing compound metabolism; protoporphyrin-IX biosynthesis; 5-aminolevulinate from L-glutamyl-tRNA(Glu): step 2/2. In Shewanella oneidensis (strain ATCC 700550 / JCM 31522 / CIP 106686 / LMG 19005 / NCIMB 14063 / MR-1), this protein is Glutamate-1-semialdehyde 2,1-aminomutase.